The primary structure comprises 352 residues: PDZ and LIM domain protein 2 (352 aa).

The PDZ domain occupies 1-84 (MALTVDVAGP…PLRLQLDRSQ (84 aa)). 2 disordered regions span residues 69 to 95 (IRQS…NGDS) and 108 to 141 (VRTH…PPPF). Residues 81–95 (DRSQAASPGQTNGDS) are compositionally biased toward polar residues. A compositionally biased stretch (low complexity) spans 117–135 (SLRSSYSSPTSLSPRAGSP). Residue S124 is modified to Phosphoserine. T126 is modified (phosphothreonine). Residues S127, S129, S134, S137, S143, S161, S197, S203, S213, and S266 each carry the phosphoserine modification. Disordered regions lie at residues 170-214 (LSYS…GGSL) and 253-275 (ERGG…PASR). Over residues 258–275 (PAFLPSSLSPQSSLPASR) the composition is skewed to low complexity. Positions 284 to 344 (HTCEKCSTSI…EKHARQRYSA (61 aa)) constitute an LIM zinc-binding domain.

Interacts with alpha-actinins ACTN1 and ACTN4, FLNA and MYH9. Interacts (via LIM zinc-binding domain) with MKRN2.

It localises to the cytoplasm. The protein resides in the cytoskeleton. Probable adapter protein located at the actin cytoskeleton that promotes cell attachment. Necessary for the migratory capacity of epithelial cells. Overexpression enhances cell adhesion to collagen and fibronectin and suppresses anchorage independent growth. May contribute to tumor cell migratory capacity. The chain is PDZ and LIM domain protein 2 (PDLIM2) from Macaca fascicularis (Crab-eating macaque).